Reading from the N-terminus, the 265-residue chain is MANEGEEIELTEFPETEKERKDEEKLSSCSEETTDTSSSSSSDHVPAPIEVNVIIQNSSRTEDELQNSTKFAVANEGKEIELTGFQGKLSSCSEETTATSSSYSSKQASVCIEENGDNETSTYRPQNVLTNLNSLYTTFEDARAQGKGMVRYKSEDLQSFLEKYPPDYRKPKRDLSATWDPGMPTPALPPRPANLGERQASTVRLHVKESNCKQPRERKANERNIVKDLKRLENKVNAIICLVVVILAVLLLVTVLSILHIGMKS.

Residues Met1–Pro14 show a composition bias toward acidic residues. The tract at residues Met1–Ile49 is disordered. Residues Met1–Ala238 lie on the Cytoplasmic side of the membrane. The segment covering Glu15–Leu26 has biased composition (basic and acidic residues). A compositionally biased stretch (low complexity) spans Ser27–Asp43. Position 123 is a phosphotyrosine; by host LCK (Tyr123). A Phosphotyrosine; by host modification is found at Tyr136. The interval Glu155 to Tyr164 is CSKH/LBD2. The tract at residues Lys172–Pro192 is disordered. The interval Met183 to Pro192 is SH3B/LBD1. A compositionally biased stretch (pro residues) spans Met183–Pro192. Positions Ile225–Asn234 are SH3 binding. A helical transmembrane segment spans residues Ile239–Leu259. Over His260–Ser265 the chain is Extracellular.

As to quaternary structure, binds host LCK, human WDR48 and human NXF1/TAP. Forms a complex with activated LCK and STAT1 and STAT3. Post-translationally, phosphorylation on Tyr-123 acts as a docking site for the recruitment of STATs 1 and 3.

The protein localises to the host cell membrane. In terms of biological role, plays a critical role in virus induced T-cell transformation. Binds to T-cell-specific tyrosine kinase LCK SH2 and SH3 domains, thereby activating its kinase activity. Once phosphorylated by host LCK, forms a complex with at least STAT 1 and 3, resulting on the phosphorylation of STAT3 and presumably STAT1, and their migration into the nucleus to induce transcription of target genes. Stimulates host ILF3/NF-AT-90 activity. Association with host NXF1/TAP transduces the signal up-regulating surface expression of adhesion molecules as well as activating NF-kappa-B activity. Acts synergistically with StpC to stimulate NF-kappa-B activity and interleukin-2 gene expression. Activation of NF-kappa-B protects lymphocytes from apoptosis, thereby facilitating viral induced cell transformation. May cause down-regulation of host LCK and cell apoptosis when stably overexpressed ex vivo. Interaction with WDR48 induce degradation of T-cell receptor in a lysosome-dependent fashion, when both proteins are overexpressed. The biological effect of this interaction remains controversial since no T-cell receptor degradation is observed in infected cells. The sequence is that of Tyrosine protein kinase-interacting protein from Saimiriine herpesvirus 2 (strain 484) (SaHV-2).